Reading from the N-terminus, the 157-residue chain is MPSVESFELDHNAVVAPYVRHCGVHKVGTDGVVNKFDIRFCQPNKQAMKPDTIHTLEHLLAFTIRTHSEKYDHFDIIDISPMGCQTGYYLVVSGEPTAEEIVDLLDATLKEAIDITEIPAANEKQCGQAKLHDLEGAKRLMRFWLSQDKEDLLKVFG.

The Fe cation site is built by H54, H58, and C126.

The protein belongs to the LuxS family. In terms of assembly, homodimer. The cofactor is Fe cation.

The catalysed reaction is S-(5-deoxy-D-ribos-5-yl)-L-homocysteine = (S)-4,5-dihydroxypentane-2,3-dione + L-homocysteine. In terms of biological role, involved in the synthesis of autoinducer 2 (AI-2) which is secreted by bacteria and is used to communicate both the cell density and the metabolic potential of the environment. The regulation of gene expression in response to changes in cell density is called quorum sensing. Catalyzes the transformation of S-ribosylhomocysteine (RHC) to homocysteine (HC) and 4,5-dihydroxy-2,3-pentadione (DPD). The polypeptide is S-ribosylhomocysteine lyase (Bacillus velezensis (strain DSM 23117 / BGSC 10A6 / LMG 26770 / FZB42) (Bacillus amyloliquefaciens subsp. plantarum)).